A 138-amino-acid polypeptide reads, in one-letter code: Cysteine desulfuration protein SufE (138 aa).

The active-site Cysteine persulfide intermediate is the cysteine 51.

It belongs to the SufE family. In terms of assembly, homodimer. Interacts with SufS.

It is found in the cytoplasm. It participates in cofactor biosynthesis; iron-sulfur cluster biosynthesis. In terms of biological role, participates in cysteine desulfuration mediated by SufS. Cysteine desulfuration mobilizes sulfur from L-cysteine to yield L-alanine and constitutes an essential step in sulfur metabolism for biosynthesis of a variety of sulfur-containing biomolecules. Functions as a sulfur acceptor for SufS, by mediating the direct transfer of the sulfur atom from the S-sulfanylcysteine of SufS, an intermediate product of cysteine desulfuration process. This Klebsiella pneumoniae subsp. pneumoniae (strain ATCC 700721 / MGH 78578) protein is Cysteine desulfuration protein SufE.